We begin with the raw amino-acid sequence, 236 residues long: 2-C-methyl-D-erythritol 4-phosphate cytidylyltransferase (236 aa).

It belongs to the IspD/TarI cytidylyltransferase family. IspD subfamily.

It carries out the reaction 2-C-methyl-D-erythritol 4-phosphate + CTP + H(+) = 4-CDP-2-C-methyl-D-erythritol + diphosphate. Its pathway is isoprenoid biosynthesis; isopentenyl diphosphate biosynthesis via DXP pathway; isopentenyl diphosphate from 1-deoxy-D-xylulose 5-phosphate: step 2/6. Functionally, catalyzes the formation of 4-diphosphocytidyl-2-C-methyl-D-erythritol from CTP and 2-C-methyl-D-erythritol 4-phosphate (MEP). This is 2-C-methyl-D-erythritol 4-phosphate cytidylyltransferase from Pseudomonas savastanoi pv. phaseolicola (strain 1448A / Race 6) (Pseudomonas syringae pv. phaseolicola (strain 1448A / Race 6)).